Here is a 377-residue protein sequence, read N- to C-terminus: Nitric oxide reductase FlRd-NAD(+) reductase (377 aa).

The protein belongs to the FAD-dependent oxidoreductase family. FAD is required as a cofactor.

It is found in the cytoplasm. It catalyses the reaction 2 reduced [nitric oxide reductase rubredoxin domain] + NAD(+) + H(+) = 2 oxidized [nitric oxide reductase rubredoxin domain] + NADH. It functions in the pathway nitrogen metabolism; nitric oxide reduction. In terms of biological role, one of at least two accessory proteins for anaerobic nitric oxide (NO) reductase. Reduces the rubredoxin moiety of NO reductase. The chain is Nitric oxide reductase FlRd-NAD(+) reductase from Salmonella agona (strain SL483).